The primary structure comprises 384 residues: Putative 8-amino-7-oxononanoate synthase (384 aa).

Position 18 (R18) interacts with substrate. 105 to 106 (GY) lines the pyridoxal 5'-phosphate pocket. H130 lines the substrate pocket. Residues S176, 201–204 (DDAH), and 233–236 (TLSK) each bind pyridoxal 5'-phosphate. N6-(pyridoxal phosphate)lysine is present on K236. T349 is a substrate binding site.

This sequence belongs to the class-II pyridoxal-phosphate-dependent aminotransferase family. BioF subfamily. As to quaternary structure, homodimer. The cofactor is pyridoxal 5'-phosphate.

It carries out the reaction 6-carboxyhexanoyl-[ACP] + L-alanine + H(+) = (8S)-8-amino-7-oxononanoate + holo-[ACP] + CO2. The protein operates within cofactor biosynthesis; biotin biosynthesis. Catalyzes the decarboxylative condensation of pimeloyl-[acyl-carrier protein] and L-alanine to produce 8-amino-7-oxononanoate (AON), [acyl-carrier protein], and carbon dioxide. The chain is Putative 8-amino-7-oxononanoate synthase (bioF) from Desulfovibrio desulfuricans (strain ATCC 27774 / DSM 6949 / MB).